The sequence spans 256 residues: Global transcriptional regulator CodY (256 aa).

The interval 1–155 (MSLLSKTREL…AATVIGMEIL (155 aa)) is GAF domain. The segment at residues 203–222 (ASKVADRVGITRSVIVNALR) is a DNA-binding region (H-T-H motif).

The protein belongs to the CodY family.

The protein resides in the cytoplasm. DNA-binding global transcriptional regulator which is involved in the adaptive response to starvation and acts by directly or indirectly controlling the expression of numerous genes in response to nutrient availability. During rapid exponential growth, CodY is highly active and represses genes whose products allow adaptation to nutrient depletion. This Staphylococcus epidermidis (strain ATCC 35984 / DSM 28319 / BCRC 17069 / CCUG 31568 / BM 3577 / RP62A) protein is Global transcriptional regulator CodY.